The sequence spans 271 residues: Endonuclease V (271 aa).

The disordered stretch occupies residues 46–67 (TRTGDAPDVDQTTLSTSADDRT). Residues Asp-76 and Asp-140 each coordinate Mg(2+).

This sequence belongs to the endonuclease V family. Mg(2+) is required as a cofactor.

The protein localises to the cytoplasm. It carries out the reaction Endonucleolytic cleavage at apurinic or apyrimidinic sites to products with a 5'-phosphate.. DNA repair enzyme involved in the repair of deaminated bases. Selectively cleaves double-stranded DNA at the second phosphodiester bond 3' to a deoxyinosine leaving behind the intact lesion on the nicked DNA. The protein is Endonuclease V of Haloarcula marismortui (strain ATCC 43049 / DSM 3752 / JCM 8966 / VKM B-1809) (Halobacterium marismortui).